The primary structure comprises 490 residues: ATP synthase subunit alpha 1 (490 aa).

171–178 (GDNGLGKS) is an ATP binding site.

It belongs to the ATPase alpha/beta chains family. In terms of assembly, F-type ATPases have 2 components, CF(1) - the catalytic core - and CF(0) - the membrane proton channel. CF(1) has five subunits: alpha(3), beta(3), gamma(1), delta(1), epsilon(1). CF(0) has three main subunits: a(1), b(2) and c(9-12). The alpha and beta chains form an alternating ring which encloses part of the gamma chain. CF(1) is attached to CF(0) by a central stalk formed by the gamma and epsilon chains, while a peripheral stalk is formed by the delta and b chains.

The protein localises to the cell inner membrane. The enzyme catalyses ATP + H2O + 4 H(+)(in) = ADP + phosphate + 5 H(+)(out). In terms of biological role, produces ATP from ADP in the presence of a proton gradient across the membrane. The alpha chain is a regulatory subunit. The polypeptide is ATP synthase subunit alpha 1 (Legionella pneumophila (strain Corby)).